The chain runs to 312 residues: Acetyl-coenzyme A carboxylase carboxyl transferase subunit alpha (312 aa).

In terms of domain architecture, CoA carboxyltransferase C-terminal spans 36–286 (RLDKEVKSIY…KEYFLDALRT (251 aa)).

This sequence belongs to the AccA family. As to quaternary structure, acetyl-CoA carboxylase is a heterohexamer composed of biotin carboxyl carrier protein (AccB), biotin carboxylase (AccC) and two subunits each of ACCase subunit alpha (AccA) and ACCase subunit beta (AccD).

It localises to the cytoplasm. It catalyses the reaction N(6)-carboxybiotinyl-L-lysyl-[protein] + acetyl-CoA = N(6)-biotinyl-L-lysyl-[protein] + malonyl-CoA. It participates in lipid metabolism; malonyl-CoA biosynthesis; malonyl-CoA from acetyl-CoA: step 1/1. Functionally, component of the acetyl coenzyme A carboxylase (ACC) complex. First, biotin carboxylase catalyzes the carboxylation of biotin on its carrier protein (BCCP) and then the CO(2) group is transferred by the carboxyltransferase to acetyl-CoA to form malonyl-CoA. The sequence is that of Acetyl-coenzyme A carboxylase carboxyl transferase subunit alpha from Helicobacter pylori (strain J99 / ATCC 700824) (Campylobacter pylori J99).